Reading from the N-terminus, the 174-residue chain is N-terminal acetyltransferase B complex catalytic subunit NAA20 (174 aa).

In terms of domain architecture, N-acetyltransferase spans 2 to 151 (TTIRRFSCND…DGLDMRKALS (150 aa)).

This sequence belongs to the acetyltransferase family. ARD1 subfamily.

It carries out the reaction N-terminal L-methionyl-L-asparaginyl-[protein] + acetyl-CoA = N-terminal N(alpha)-acetyl-L-methionyl-L-asparaginyl-[protein] + CoA + H(+). It catalyses the reaction N-terminal L-methionyl-L-glutaminyl-[protein] + acetyl-CoA = N-terminal N(alpha)-acetyl-L-methionyl-L-glutaminyl-[protein] + CoA + H(+). The enzyme catalyses N-terminal L-methionyl-L-aspartyl-[protein] + acetyl-CoA = N-terminal N(alpha)-acetyl-L-methionyl-L-aspartyl-[protein] + CoA + H(+). The catalysed reaction is N-terminal L-methionyl-L-glutamyl-[protein] + acetyl-CoA = N-terminal N(alpha)-acetyl-L-methionyl-L-glutamyl-[protein] + CoA + H(+). Catalytic subunit of the NatB N-alpha-acetyltransferase complex. Involved in plant immunity through the regulation of SNC1 stability. This is N-terminal acetyltransferase B complex catalytic subunit NAA20 from Arabidopsis thaliana (Mouse-ear cress).